A 339-amino-acid chain; its full sequence is UDP-N-acetylenolpyruvoylglucosamine reductase (339 aa).

The region spanning 18–189 (GIDVRARLLA…LRVRLRLTRR (172 aa)) is the FAD-binding PCMH-type domain. The active site involves Arg-166. Ser-239 (proton donor) is an active-site residue. Residue Glu-335 is part of the active site.

It belongs to the MurB family. FAD serves as cofactor.

Its subcellular location is the cytoplasm. It catalyses the reaction UDP-N-acetyl-alpha-D-muramate + NADP(+) = UDP-N-acetyl-3-O-(1-carboxyvinyl)-alpha-D-glucosamine + NADPH + H(+). It participates in cell wall biogenesis; peptidoglycan biosynthesis. Its function is as follows. Cell wall formation. The chain is UDP-N-acetylenolpyruvoylglucosamine reductase from Pseudomonas aeruginosa (strain ATCC 15692 / DSM 22644 / CIP 104116 / JCM 14847 / LMG 12228 / 1C / PRS 101 / PAO1).